A 764-amino-acid chain; its full sequence is Phenylalanine--tRNA ligase beta subunit (764 aa).

The tRNA-binding domain maps to 38–148 (CIAPKNVVVG…GELVLGKELN (111 aa)). The 81-residue stretch at 375-455 (LKDRTLTFQL…RFVGIDNLVS (81 aa)) folds into the B5 domain. Asp-433, Asp-439, Glu-442, and Glu-443 together coordinate Mg(2+). Residues 673–763 (SIYPSSVRDL…LEKEFNARLK (91 aa)) enclose the FDX-ACB domain.

The protein belongs to the phenylalanyl-tRNA synthetase beta subunit family. Type 1 subfamily. In terms of assembly, tetramer of two alpha and two beta subunits. Mg(2+) serves as cofactor.

Its subcellular location is the cytoplasm. It carries out the reaction tRNA(Phe) + L-phenylalanine + ATP = L-phenylalanyl-tRNA(Phe) + AMP + diphosphate + H(+). The protein is Phenylalanine--tRNA ligase beta subunit (pheT) of Helicobacter pylori (strain ATCC 700392 / 26695) (Campylobacter pylori).